A 283-amino-acid polypeptide reads, in one-letter code: D-alanine aminotransferase (283 aa).

A substrate-binding site is contributed by tyrosine 31. Arginine 50 contributes to the pyridoxal 5'-phosphate binding site. Substrate-binding residues include arginine 98 and histidine 100. The Proton acceptor role is filled by lysine 144. An N6-(pyridoxal phosphate)lysine modification is found at lysine 144. Position 176 (glutamate 176) interacts with pyridoxal 5'-phosphate.

It belongs to the class-IV pyridoxal-phosphate-dependent aminotransferase family. As to quaternary structure, homodimer. Requires pyridoxal 5'-phosphate as cofactor.

The enzyme catalyses D-alanine + 2-oxoglutarate = D-glutamate + pyruvate. Acts on the D-isomers of alanine, leucine, aspartate, glutamate, aminobutyrate, norvaline and asparagine. The enzyme transfers an amino group from a substrate D-amino acid to the pyridoxal phosphate cofactor to form pyridoxamine and an alpha-keto acid in the first half-reaction. The second half-reaction is the reverse of the first, transferring the amino group from the pyridoxamine to a second alpha-keto acid to form the product D-amino acid via a ping-pong mechanism. This is an important process in the formation of D-alanine and D-glutamate, which are essential bacterial cell wall components. This is D-alanine aminotransferase (dat) from Bacillus licheniformis.